A 200-amino-acid chain; its full sequence is 3-isopropylmalate dehydratase small subunit (200 aa).

Belongs to the LeuD family. LeuD type 1 subfamily. In terms of assembly, heterodimer of LeuC and LeuD.

The catalysed reaction is (2R,3S)-3-isopropylmalate = (2S)-2-isopropylmalate. It participates in amino-acid biosynthesis; L-leucine biosynthesis; L-leucine from 3-methyl-2-oxobutanoate: step 2/4. In terms of biological role, catalyzes the isomerization between 2-isopropylmalate and 3-isopropylmalate, via the formation of 2-isopropylmaleate. In Pectobacterium carotovorum subsp. carotovorum (strain PC1), this protein is 3-isopropylmalate dehydratase small subunit.